Here is a 467-residue protein sequence, read N- to C-terminus: Cysteine--tRNA ligase (467 aa).

Cysteine 30 contacts Zn(2+). The 'HIGH' region motif lies at 32-42 (PTVYNYIHIGN). Residues cysteine 210, histidine 235, and glutamate 239 each contribute to the Zn(2+) site. Positions 267 to 271 (KMSKS) match the 'KMSKS' region motif. ATP is bound at residue lysine 270. Serine 271 is modified (phosphoserine).

Belongs to the class-I aminoacyl-tRNA synthetase family. Monomer. Zn(2+) serves as cofactor.

It is found in the cytoplasm. It carries out the reaction tRNA(Cys) + L-cysteine + ATP = L-cysteinyl-tRNA(Cys) + AMP + diphosphate. In Geobacillus thermodenitrificans (strain NG80-2), this protein is Cysteine--tRNA ligase.